We begin with the raw amino-acid sequence, 441 residues long: Trigger factor (441 aa).

Residues 161-246 (GDQVTIDFVG…VSEVAEQILP (86 aa)) form the PPIase FKBP-type domain.

The protein belongs to the FKBP-type PPIase family. Tig subfamily.

The protein localises to the cytoplasm. The catalysed reaction is [protein]-peptidylproline (omega=180) = [protein]-peptidylproline (omega=0). Functionally, involved in protein export. Acts as a chaperone by maintaining the newly synthesized protein in an open conformation. Functions as a peptidyl-prolyl cis-trans isomerase. In Marinomonas sp. (strain MWYL1), this protein is Trigger factor.